Consider the following 439-residue polypeptide: Homogentisate 1,2-dioxygenase (439 aa).

The active-site Proton acceptor is His293. The Fe cation site is built by His336 and Glu342. Homogentisate is bound by residues Tyr351 and His372. Residue His372 coordinates Fe cation.

This sequence belongs to the homogentisate dioxygenase family. Hexamer; dimer of trimers. The cofactor is Fe cation.

It catalyses the reaction homogentisate + O2 = 4-maleylacetoacetate + H(+). The protein operates within amino-acid degradation; L-phenylalanine degradation; acetoacetate and fumarate from L-phenylalanine: step 4/6. Its function is as follows. Involved in the catabolism of homogentisate (2,5-dihydroxyphenylacetate or 2,5-OH-PhAc), a central intermediate in the degradation of phenylalanine and tyrosine. Catalyzes the oxidative ring cleavage of the aromatic ring of homogentisate to yield maleylacetoacetate. The polypeptide is Homogentisate 1,2-dioxygenase (Cupriavidus necator (strain ATCC 17699 / DSM 428 / KCTC 22496 / NCIMB 10442 / H16 / Stanier 337) (Ralstonia eutropha)).